Reading from the N-terminus, the 87-residue chain is Large ribosomal subunit protein bL27 (87 aa).

The tract at residues 1 to 25 is disordered; the sequence is MAHKKGASSSRNGRDSNAQRLGVKR. Over residues 7 to 19 the composition is skewed to polar residues; that stretch reads ASSSRNGRDSNAQ.

The protein belongs to the bacterial ribosomal protein bL27 family.

In Rhodococcus jostii (strain RHA1), this protein is Large ribosomal subunit protein bL27.